A 1299-amino-acid polypeptide reads, in one-letter code: DNA-directed RNA polymerase subunit beta' (1299 aa).

Zn(2+) contacts are provided by Cys60, Cys62, Cys75, and Cys78. The tract at residues 188–209 (GAKSDQKRRAKDGAEKEMGQTR) is disordered. Mg(2+) contacts are provided by Asp535, Asp537, and Asp539. Zn(2+) contacts are provided by Cys882, Cys959, Cys966, and Cys969.

The protein belongs to the RNA polymerase beta' chain family. The RNAP catalytic core consists of 2 alpha, 1 beta, 1 beta' and 1 omega subunit. When a sigma factor is associated with the core the holoenzyme is formed, which can initiate transcription. Mg(2+) serves as cofactor. Requires Zn(2+) as cofactor.

It carries out the reaction RNA(n) + a ribonucleoside 5'-triphosphate = RNA(n+1) + diphosphate. Its function is as follows. DNA-dependent RNA polymerase catalyzes the transcription of DNA into RNA using the four ribonucleoside triphosphates as substrates. The polypeptide is DNA-directed RNA polymerase subunit beta' (Clavibacter michiganensis subsp. michiganensis (strain NCPPB 382)).